The chain runs to 534 residues: MAVESRAVSTPVPQNSQEQELILVKVEESRSWGQKLKQSGSARSCQELFRQQFRKFCYQETPGPREALGRLQELCYQWLRPELHTKEQILELLVLEQFLSILPEELQIWVQQHSPKNGEEAVTLLEDLEREFDDPGQQVPATPQGPPMPWKDLTCLGAAQEFTHIQRQPLKKQLKPWEPCLPPKSGCENNESAIKKDISGEKSQRLSQEPSFGGFSEHKSSLEWQQGSAPGETLRRSPSQRASFSPVIFTHKLLANRDHPEPQRNLILSTNSVTYQKVPTEERPYRCDICGHSFKQHSSLTQHQRIHTGEKPYKCNQCGKAFSLRSYLIIHQRIHSGEKAYECSECGKAFNQSSALIRHRKIHTGEKACKCNECGKAFSQSSYLIIHQRIHTGEKPYECNECGKTFSQSSKLIRHQRIHTGERPYECNECGKAFRQSSELITHQRIHSGEKPYECNECGKAFSLSSNLIRHQRIHSGEEPYQCNECGKTFKRSSALVQHQRIHSGEEAYICSECGKAFRHRSVLTRHQRVHTVK.

A Phosphoserine modification is found at Ser-31. The 83-residue stretch at 50 to 132 (RQQFRKFCYQ…TLLEDLEREF (83 aa)) folds into the SCAN box domain. Residues Lys-55, Lys-171, Lys-202, and Lys-252 each participate in a glycyl lysine isopeptide (Lys-Gly) (interchain with G-Cter in SUMO2) cross-link. The interval 197 to 242 (DISGEKSQRLSQEPSFGGFSEHKSSLEWQQGSAPGETLRRSPSQRA) is disordered. 9 C2H2-type zinc fingers span residues 285 to 307 (YRCD…QRIH), 313 to 335 (YKCN…QRIH), 341 to 363 (YECS…RKIH), 369 to 391 (CKCN…QRIH), 397 to 419 (YECN…QRIH), 425 to 447 (YECN…QRIH), 453 to 475 (YECN…QRIH), 481 to 503 (YQCN…QRIH), and 509 to 531 (YICS…QRVH).

Belongs to the krueppel C2H2-type zinc-finger protein family.

The protein resides in the nucleus. In terms of biological role, DNA-dependent transcriptional repressor. This Bos taurus (Bovine) protein is Zinc finger protein 397 (ZNF397).